The sequence spans 506 residues: MTDFVQLIGIEKHFGGIAALKSVDFTVKSGEVHALIGENGAGKSTLMGVLSGNVIPTAGTISVEGCVRRFSTPGDAIAAGIAMIHQELVLAPDLTVAENIFMNRMPRLIDWAKLRRDAAQILDRLGFEIDPGATIGDLPLAQRQIVEIAKALSLNARLIIFDEPTAVLGPSDARRLLNLIRSLRSEGVAIVYISHRLDEVADIADRVTVLNDGSLIATRAAKDVTIEEMVRLMVGRPISALFGEKRTSPFGAEIFRVESLTAGPLVQDLSFGVRAGEIVGLGGLIGSGRTETARAIFGADKRESGRIFIDGSQVKIRDPRDAVKAGIGLVPEDRRGQGVVIDASIRINTTMTSLRRFSPAGIIKRTFERRFVGEKIAALKVKSAGIDAPVQSLSGGNQQKVVIGKWVDVASKVIILDEPTRGVDVGAKSEIYAIIRRLADEGRAVLLISSDHQELFGLCDRVLVMGRGRIRSELLPGEFDEERLLSASLAIEPIQTTVRTDQNPAG.

ABC transporter domains follow at residues 5 to 237 (VQLI…VGRP) and 249 to 492 (PFGA…LAIE). ATP is bound at residue 37–44 (GENGAGKS).

It belongs to the ABC transporter superfamily. Ribose importer (TC 3.A.1.2.1) family. In terms of assembly, the complex is composed of an ATP-binding protein (RbsA), two transmembrane proteins (RbsC) and a solute-binding protein (RbsB).

Its subcellular location is the cell inner membrane. The enzyme catalyses D-ribose(out) + ATP + H2O = D-ribose(in) + ADP + phosphate + H(+). In terms of biological role, part of the ABC transporter complex RbsABC involved in ribose import. Responsible for energy coupling to the transport system. This is Ribose import ATP-binding protein RbsA from Chelativorans sp. (strain BNC1).